Reading from the N-terminus, the 202-residue chain is Small ribosomal subunit protein uS4 (202 aa).

The disordered stretch occupies residues 15–42; that stretch reads LGDLPGLTRKAAKRSYPPGQHGQARRKR. The 63-residue stretch at 90 to 152 folds into the S4 RNA-binding domain; the sequence is NRLDNVCFRI…KCSKLLAEAN (63 aa).

This sequence belongs to the universal ribosomal protein uS4 family. In terms of assembly, part of the 30S ribosomal subunit. Contacts protein S5. The interaction surface between S4 and S5 is involved in control of translational fidelity.

Its function is as follows. One of the primary rRNA binding proteins, it binds directly to 16S rRNA where it nucleates assembly of the body of the 30S subunit. Functionally, with S5 and S12 plays an important role in translational accuracy. The sequence is that of Small ribosomal subunit protein uS4 from Synechococcus sp. (strain CC9311).